We begin with the raw amino-acid sequence, 710 residues long: Polyribonucleotide nucleotidyltransferase (710 aa).

Mg(2+) is bound by residues Asp-491 and Asp-497. Positions 559-618 constitute a KH domain; the sequence is PRLITIKINPEKIRDVIGKGGAVIRALTEETGTQIDISDEGVVTIASVDAAAGQEAKRRI. The S1 motif domain maps to 628–696; it reads GKVYEGTVLK…DRGRLKLSMK (69 aa).

Belongs to the polyribonucleotide nucleotidyltransferase family. Mg(2+) serves as cofactor.

It is found in the cytoplasm. The enzyme catalyses RNA(n+1) + phosphate = RNA(n) + a ribonucleoside 5'-diphosphate. Its function is as follows. Involved in mRNA degradation. Catalyzes the phosphorolysis of single-stranded polyribonucleotides processively in the 3'- to 5'-direction. The protein is Polyribonucleotide nucleotidyltransferase of Herminiimonas arsenicoxydans.